The chain runs to 251 residues: Carbohydrate deacetylase (251 aa).

The Mg(2+) site is built by His-59 and His-122.

This sequence belongs to the YdjC deacetylase family. Homodimer. It depends on Mg(2+) as a cofactor.

In terms of biological role, probably catalyzes the deacetylation of acetylated carbohydrates an important step in the degradation of oligosaccharides. This is Carbohydrate deacetylase from Vibrio campbellii (strain ATCC BAA-1116).